The primary structure comprises 426 residues: Ankyrin repeat-containing protein BDA1 (426 aa).

ANK repeat units lie at residues methionine 1–glutamine 29, isoleucine 36–lysine 65, tyrosine 70–arginine 99, glycine 104–aspartate 134, asparagine 138–aspartate 167, and glycine 182–isoleucine 212. 4 helical membrane-spanning segments follow: residues alanine 288–leucine 308, tryptophan 329–valine 349, tryptophan 355–methionine 375, and phenylalanine 380–valine 400.

It localises to the cell membrane. Functionally, involved in plant defense. Required for basal resistance against Pseudomonas syringae pv. tomato DC3000. Required for resistance against nonpathogenic bacteria. May be involved in signaling components that function downstream of SNC2 and upstream of NPR1 and WRKY70 to regulate defense responses. The chain is Ankyrin repeat-containing protein BDA1 from Arabidopsis thaliana (Mouse-ear cress).